The following is a 212-amino-acid chain: Ion-translocating oxidoreductase complex subunit G (212 aa).

A helical transmembrane segment spans residues 9 to 29 (ASLLGLFALLCTALVALVNQF). Thr176 is modified (FMN phosphoryl threonine).

It belongs to the RnfG family. As to quaternary structure, the complex is composed of six subunits: RnfA, RnfB, RnfC, RnfD, RnfE and RnfG. FMN is required as a cofactor.

Its subcellular location is the cell inner membrane. In terms of biological role, part of a membrane-bound complex that couples electron transfer with translocation of ions across the membrane. This is Ion-translocating oxidoreductase complex subunit G from Shewanella loihica (strain ATCC BAA-1088 / PV-4).